The sequence spans 502 residues: ATP synthase subunit alpha (502 aa).

The segment at 115–137 (VDGLGPVETTETRPIESPAPGVM) is disordered. Residue 169–176 (GDRQTGKT) participates in ATP binding.

It belongs to the ATPase alpha/beta chains family. As to quaternary structure, F-type ATPases have 2 components, CF(1) - the catalytic core - and CF(0) - the membrane proton channel. CF(1) has five subunits: alpha(3), beta(3), gamma(1), delta(1), epsilon(1). CF(0) has three main subunits: a(1), b(2) and c(9-12). The alpha and beta chains form an alternating ring which encloses part of the gamma chain. CF(1) is attached to CF(0) by a central stalk formed by the gamma and epsilon chains, while a peripheral stalk is formed by the delta and b chains.

It is found in the cell membrane. It catalyses the reaction ATP + H2O + 4 H(+)(in) = ADP + phosphate + 5 H(+)(out). Produces ATP from ADP in the presence of a proton gradient across the membrane. The alpha chain is a regulatory subunit. This Geobacillus kaustophilus (strain HTA426) protein is ATP synthase subunit alpha.